Reading from the N-terminus, the 317-residue chain is Porphobilinogen deaminase (317 aa).

Cysteine 240 is modified (S-(dipyrrolylmethanemethyl)cysteine).

It belongs to the HMBS family. Monomer. It depends on dipyrromethane as a cofactor.

The enzyme catalyses 4 porphobilinogen + H2O = hydroxymethylbilane + 4 NH4(+). The protein operates within porphyrin-containing compound metabolism; protoporphyrin-IX biosynthesis; coproporphyrinogen-III from 5-aminolevulinate: step 2/4. Tetrapolymerization of the monopyrrole PBG into the hydroxymethylbilane pre-uroporphyrinogen in several discrete steps. This is Porphobilinogen deaminase from Nitratidesulfovibrio vulgaris (strain DSM 19637 / Miyazaki F) (Desulfovibrio vulgaris).